We begin with the raw amino-acid sequence, 776 residues long: MRQNYDDRKIVKQYREIARQIVRKEGLYKNMDQDELREQTNFWREKFKTKPMTERDKINIFALAREAASRIIGLDAVVVQLIGALVLGDGKVAEMKTGEGKTLMSLFVMFIEVMRGNRVHLVTANEYLARRDREEIGQVLEYLGISVALNESGLDKDQKKAIYTADVIYGTASEFGFDYLRDNMVRQKEDKVQSGLDFVLIDEADSILIDEARTPLLISDRKEEDLSLYQTANELVQTMMKDDYEIEEHKRFVWLNDAGIERAQKFWGVESLYSAEAQVELRITMLLMRAHFLMHKDKDYVVLDGEVLIIDPHTGRALPGRRFNDGLHQAIEAKEGVEVKEESRTLATITIQNYFRMYKRLSGMTGTAKTEEEEFRQIYNMDVVVIPTNLRVNREDMPDDIFYTKKEKGRAIVYEVSWRYEKGQPTLIGTSSIKSNEWISSLLDAAGIPHQVLNAKNHAQEAEIIAKAGKRGMVTLATNMAGRGTDIKLDPDVHKLGGLAVIGTERHESRRIDLQLMGRSGRRGDPGFSKFMISLEDDLLEQFESKSWEKLSTKLKRKAPRDGKPVNSRKIHSVIVDAQKRLEGANYDIRKDLLSYDEVIDLQRKMVYKERDQLLERNKLGVSSEKILREVAEYSFIHPLELEEEELEKYYSRQKELLGGTKFPISFDQVTLMDPVEVVEEIVAWHKKERNKFPVETITAIEKEVYLNLMDQMWVMHLDAMVQLREGIHLRAYGQQDPLVMYQKEGAQLFEKFQADYHFYFAHALLELDPDGLIQG.

Residues glutamine 80, 98–102 (GEGKT), and aspartate 486 contribute to the ATP site.

The protein belongs to the SecA family. Monomer and homodimer. Part of the essential Sec protein translocation apparatus which comprises SecA, SecYEG and auxiliary proteins SecDF. Other proteins may also be involved.

The protein resides in the cell membrane. Its subcellular location is the cytoplasm. It carries out the reaction ATP + H2O + cellular proteinSide 1 = ADP + phosphate + cellular proteinSide 2.. In terms of biological role, part of the Sec protein translocase complex. Interacts with the SecYEG preprotein conducting channel. Has a central role in coupling the hydrolysis of ATP to the transfer of proteins into and across the cell membrane, serving as an ATP-driven molecular motor driving the stepwise translocation of polypeptide chains across the membrane. The chain is Protein translocase subunit SecA 2 from Listeria innocua serovar 6a (strain ATCC BAA-680 / CLIP 11262).